Reading from the N-terminus, the 113-residue chain is Large ribosomal subunit protein bL17 (113 aa).

Belongs to the bacterial ribosomal protein bL17 family. In terms of assembly, part of the 50S ribosomal subunit. Contacts protein L32.

The sequence is that of Large ribosomal subunit protein bL17 from Natranaerobius thermophilus (strain ATCC BAA-1301 / DSM 18059 / JW/NM-WN-LF).